The chain runs to 100 residues: Large ribosomal subunit protein uL23 (100 aa).

This sequence belongs to the universal ribosomal protein uL23 family. In terms of assembly, part of the 50S ribosomal subunit. Contacts protein L29, and trigger factor when it is bound to the ribosome.

Functionally, one of the early assembly proteins it binds 23S rRNA. One of the proteins that surrounds the polypeptide exit tunnel on the outside of the ribosome. Forms the main docking site for trigger factor binding to the ribosome. The protein is Large ribosomal subunit protein uL23 of Proteus mirabilis (strain HI4320).